A 360-amino-acid chain; its full sequence is Phospho-N-acetylmuramoyl-pentapeptide-transferase (360 aa).

10 consecutive transmembrane segments (helical) span residues 20 to 40, 71 to 91, 93 to 113, 134 to 154, 168 to 188, 199 to 219, 239 to 259, 263 to 283, 288 to 308, and 337 to 357; these read YITFRAGGAFFTALLFGFFFG, TPTMGGLLILAALTIGTLLWA, LDNGYVWIVLLVTLGFAAIGF, LLIGLCIAAAAGAAAAWLHPA, ALINLGLLYVPFTVLVILGAA, GLAIMPVMIAAASFSVIAYMV, LAVFVAALIGGGLGFLWYNAP, VFMGDTGSLALGGALGAIAVV, IVLAIVGGLFVVEALSVIIQV, and QIVIRFWIIALILALIGLATL.

The protein belongs to the glycosyltransferase 4 family. MraY subfamily. The cofactor is Mg(2+).

Its subcellular location is the cell inner membrane. The enzyme catalyses UDP-N-acetyl-alpha-D-muramoyl-L-alanyl-gamma-D-glutamyl-meso-2,6-diaminopimeloyl-D-alanyl-D-alanine + di-trans,octa-cis-undecaprenyl phosphate = di-trans,octa-cis-undecaprenyl diphospho-N-acetyl-alpha-D-muramoyl-L-alanyl-D-glutamyl-meso-2,6-diaminopimeloyl-D-alanyl-D-alanine + UMP. It participates in cell wall biogenesis; peptidoglycan biosynthesis. Functionally, catalyzes the initial step of the lipid cycle reactions in the biosynthesis of the cell wall peptidoglycan: transfers peptidoglycan precursor phospho-MurNAc-pentapeptide from UDP-MurNAc-pentapeptide onto the lipid carrier undecaprenyl phosphate, yielding undecaprenyl-pyrophosphoryl-MurNAc-pentapeptide, known as lipid I. In Paracoccus denitrificans (strain Pd 1222), this protein is Phospho-N-acetylmuramoyl-pentapeptide-transferase.